The following is a 441-amino-acid chain: Chromatin structure-remodeling complex subunit SFH1 (441 aa).

The span at 124-137 (DFDANDFEDDDDDD) shows a compositional bias: acidic residues. Disordered stretches follow at residues 124-183 (DFDA…AAPP) and 383-407 (EMTPEEMQKREMERDRSSRRLKRES). 2 stretches are compositionally biased toward basic and acidic residues: residues 138-147 (QSQRESRDGS) and 155-166 (DGTKKEEQDKFA).

It belongs to the SNF5 family.

Its subcellular location is the nucleus. Part of the chromatin structure-remodeling complex (RSC) which is involved in transcription regulation and nucleosome positioning. RSC is responsible for the transfer of a histone octamer from a nucleosome core particle to naked DNA. The reaction requires ATP and involves an activated RSC-nucleosome intermediate. Remodeling reaction also involves DNA translocation, DNA twist and conformational change. As a reconfigurer of centromeric and flanking nucleosomes, RSC complex is required both for proper kinetochore function in chromosome segregation and, via a PKC1-dependent signaling pathway, for organization of the cellular cytoskeleton. This subunit is essential for mitotic growth and required for cell cycle progression. The chain is Chromatin structure-remodeling complex subunit SFH1 (SFH1) from Yarrowia lipolytica (strain CLIB 122 / E 150) (Yeast).